The sequence spans 217 residues: MNQTLLSEFGSPSQRVENALESLRNGRGVLVLDDEDRENEGDMIFAAQNMTVEQMALTIRYGSGIVCLCLTEERRQQLALPMMVERNSSHYQTAFTVTIEAAEGVSTGVSAADRLTTIRAAIKDNAKPTDLNRPGHVFPLCAQPGGVLVRGGHTEAAVDLTTLAGLKPAGVLCEVTNDDGSMAHAPEIIAFGRRHNMPVLTIEDLVAYRRALMREVS.

D-ribulose 5-phosphate contacts are provided by residues 37–38, D42, 150–154, and E174; these read RE and RGGHT. E38 is a binding site for Mg(2+). A Mg(2+)-binding site is contributed by H153.

This sequence belongs to the DHBP synthase family. As to quaternary structure, homodimer. Requires Mg(2+) as cofactor. It depends on Mn(2+) as a cofactor.

The enzyme catalyses D-ribulose 5-phosphate = (2S)-2-hydroxy-3-oxobutyl phosphate + formate + H(+). Its pathway is cofactor biosynthesis; riboflavin biosynthesis; 2-hydroxy-3-oxobutyl phosphate from D-ribulose 5-phosphate: step 1/1. Catalyzes the conversion of D-ribulose 5-phosphate to formate and 3,4-dihydroxy-2-butanone 4-phosphate. The sequence is that of 3,4-dihydroxy-2-butanone 4-phosphate synthase from Sodalis glossinidius (strain morsitans).